Here is a 213-residue protein sequence, read N- to C-terminus: Thiopurine S-methyltransferase (213 aa).

Positions 10, 45, 66, and 121 each coordinate S-adenosyl-L-methionine.

Belongs to the class I-like SAM-binding methyltransferase superfamily. TPMT family.

Its subcellular location is the cytoplasm. The catalysed reaction is S-adenosyl-L-methionine + a thiopurine = S-adenosyl-L-homocysteine + a thiopurine S-methylether.. The polypeptide is Thiopurine S-methyltransferase (Aliivibrio fischeri (strain MJ11) (Vibrio fischeri)).